The following is a 308-amino-acid chain: Cyclopropane mycolic acid synthase 2 (308 aa).

Residues 44-45, 79-87, 105-110, and 137-138 contribute to the S-adenosyl-L-methionine site; these read YS, LLDIGCGWG, TLSANQ, and WE. Residue cysteine 290 is part of the active site.

Belongs to the CFA/CMAS family. Homodimer.

The protein localises to the cytoplasm. The catalysed reaction is a 1-acyl-2-(9Z)-enoyl-sn-glycero-3-phospholipid + S-adenosyl-L-methionine = a 1-acyl-2-(9-cyclopronane)-acyl-sn-glycero-3-phospholipid + S-adenosyl-L-homocysteine + H(+). The protein operates within lipid metabolism; mycolic acid biosynthesis. Functionally, catalyzes the formation of trans cyclopropanated ketomycolate or methoxymycolate through the conversion of a double bond to a cyclopropane ring at the proximal position of an oxygenated mycolic acid via the transfer of a methylene group from S-adenosyl-L-methionine. In the absence of MmaA2, CmaA2 has a non-specific cis-cyclopropanating activity and is able to catalyze the conversion of a double bond to a cis cyclopropane ring at the distal position of an alpha mycolic acid. Cyclopropanated mycolic acids are key factors participating in cell envelope permeability, host immunomodulation and persistence. The protein is Cyclopropane mycolic acid synthase 2 (cmaA2) of Mycobacterium leprae (strain TN).